The sequence spans 1169 residues: Transcription-repair-coupling factor (1169 aa).

The Helicase ATP-binding domain occupies 634-795 (DMERARPMDR…MLGVRDLSVI (162 aa)). ATP is bound at residue 647–654 (GDVGYGKT). The DEEQ box signature appears at 748 to 751 (DEEQ). The Helicase C-terminal domain occupies 809 to 970 (VLEQNTNFIK…GFKIAMRDLN (162 aa)).

The protein in the N-terminal section; belongs to the UvrB family. It in the C-terminal section; belongs to the helicase family. RecG subfamily.

Its subcellular location is the cytoplasm. Couples transcription and DNA repair by recognizing RNA polymerase (RNAP) stalled at DNA lesions. Mediates ATP-dependent release of RNAP and its truncated transcript from the DNA, and recruitment of nucleotide excision repair machinery to the damaged site. The protein is Transcription-repair-coupling factor of Staphylococcus epidermidis (strain ATCC 35984 / DSM 28319 / BCRC 17069 / CCUG 31568 / BM 3577 / RP62A).